An 876-amino-acid polypeptide reads, in one-letter code: MSKSTAEIRQAFLDFFHSKGHQVVASSSLVPHNDPTLLFTNAGMNQFKDVFLGLDKRNYSRATTSQRCVRAGGKHNDLENVGYTARHHTFFEMLGNFSFGDYFKHDAIQFAWELLTSEKWFALPKERLWVTVYESDDEAYEIWEKEVGIPRERIIRIGDNKGAPYASDNFWQMGDTGPCGPCTEIFYDHGDHIWGGPPGSPEEDGDRYIEIWNIVFMQFNRQADGTMEPLPKPSVDTGMGLERIAAVLQHVNSNYDIDLFRTLIQAVAKVTGATDLSNKSLRVIADHIRSCAFLIADGVMPSNENRGYVLRRIIRRAVRHGNMLGAKETFFYKLVGPLIDVMGSAGEDLKRQQAQVEQVLKTEEEQFARTLERGLALLDEELAKLSGDTLDGETAFRLYDTYGFPVDLTADVCRERNIKVDEAGFEAAMEEQRRRAREASGFGADYNAMIRVDSASEFKGYDHLELNGKVTALFVDGKAVDAINAGQEAVVVLDQTPFYAESGGQVGDKGELKGANFSFAVEDTQKYGQAIGHIGKLAAGSLKVGDAVQADVDEARRARIRLNHSATHLMHAALRQVLGTHVSQKGSLVNDKVLRFDFSHNEAMKPEEIRVVEDLVNAQIRRNLPIETNIMDLEAAKAKGAMALFGEKYDERVRVLSMGDFSTELCGGTHASRTGDIGLFRIISESGTAAGVRRIEAVTGEGAITTVHADSDRLSEVAHLLKGDSNNLADKVRSVLERTRQLEKELQQLKEQAAAQESANLSSKAIDVNGVKLLVSELSGVEPKMLRTMVDDLKNQLGSTIIVLATVAEGKVSLIAGVSKDVTDRVKAGELIGMVAQQVGGKGGGRPDMAQAGGTDAAALPAALASVKGWVSAKLQ.

K74 bears the N6-acetyllysine mark. Positions 564, 568, 666, and 670 each coordinate Zn(2+).

The protein belongs to the class-II aminoacyl-tRNA synthetase family. Homotetramer. It depends on Zn(2+) as a cofactor.

Its subcellular location is the cytoplasm. It catalyses the reaction tRNA(Ala) + L-alanine + ATP = L-alanyl-tRNA(Ala) + AMP + diphosphate. Functionally, catalyzes the attachment of alanine to tRNA(Ala) in a two-step reaction: alanine is first activated by ATP to form Ala-AMP and then transferred to the acceptor end of tRNA(Ala). Also edits incorrectly charged Ser-tRNA(Ala) and Gly-tRNA(Ala) via its editing domain. This is Alanine--tRNA ligase from Shigella boydii serotype 18 (strain CDC 3083-94 / BS512).